The following is an 86-amino-acid chain: Late effector protein 1 (86 aa).

An N-terminal signal peptide occupies residues 1 to 24 (MRSHQMAAFFAVSLMMMVVLGALS).

Belongs to the lep1 family. Interacts at the cell wall with secreted rep1 repellent peptides.

It is found in the secreted. Its subcellular location is the cell wall. In terms of biological role, core effector contributing to spore formation and tumor formation at the host plant. Modulates surface hydrophobicity promoting cell-cell or cell-surface contacts. Lep1 and rep1 interact in aerial hyphae to form a strong hydrophobic layer. Plays a crucial role in hyphal aggregation that might be a prerequisite for strong proliferation of diploid cells and for induction of the morphological changes associated with spore formation. The protein is Late effector protein 1 of Mycosarcoma maydis (Corn smut fungus).